The chain runs to 345 residues: MDNVIGLEIIEVVEQAAIASARWMGKGEKNTADEVAVEAMRERMNKIHMRGRIVIGEGERDEAPMLYIGEEVGICTQPDAKKMCEVEQLIEIDIAVDPCEGTNLVAYGQNGSMAVLAISEKGGLLAAPDVYMKKLAAPAVAKNHVDINKSATENLKIISECMDRAVEELVVVVMDRPRHKQLISEIRQAGARVRLISDGDVSAAISCAFAGTNIHALMGIGAAPEGVISAAAMRALGGHFQGQLIYDPAIVKTGLIGESKEDNMKRLKDMGIEDPDKVYNAEELASGETVLFAACGITPGTLMEGVRFFPNGARTQSLVISSQSKTARFVDTVHMFGETKTLQLK.

Residues Asp33, Glu57, Asp97, and Glu100 each coordinate Mn(2+). Substrate is bound by residues 100–102 (EGT), Tyr131, 176–178 (RPR), and 198–200 (DGD). A Mn(2+)-binding site is contributed by Glu225.

Belongs to the FBPase class 2 family. Homotetramer. Mn(2+) is required as a cofactor.

The enzyme catalyses beta-D-fructose 1,6-bisphosphate + H2O = beta-D-fructose 6-phosphate + phosphate. It catalyses the reaction D-sedoheptulose 1,7-bisphosphate + H2O = D-sedoheptulose 7-phosphate + phosphate. The protein operates within carbohydrate biosynthesis; Calvin cycle. In terms of biological role, catalyzes the hydrolysis of fructose 1,6-bisphosphate (Fru 1,6-P2) and sedoheptulose 1,7-bisphosphate (Sed 1,7-P2) to fructose 6-phosphate and sedoheptulose 7-phosphate, respectively. The chain is D-fructose 1,6-bisphosphatase class 2/sedoheptulose 1,7-bisphosphatase from Trichodesmium erythraeum (strain IMS101).